We begin with the raw amino-acid sequence, 102 residues long: EPIDERMAL PATTERNING FACTOR-like protein 9 (102 aa).

The signal sequence occupies residues 1–31 (MKHEMMNIKPRCITIFFLLFALLLGNYVVQA). 3 cysteine pairs are disulfide-bonded: cysteine 65-cysteine 98, cysteine 70-cysteine 77, and cysteine 73-cysteine 100.

This sequence belongs to the plant cysteine rich small secretory peptide family. Epidermal patterning factor subfamily. In terms of assembly, interacts with ERECTA and TMM. As to expression, expressed in immature organs, including leaves, stems and flower buds, but not in roots, shoot apical meristem and petals. Detected in the mesophyll tissues but not in the epidermal tissues where stomata develop.

It is found in the secreted. The protein resides in the extracellular space. The protein localises to the apoplast. Positively regulates stomatal density and patterning. Acts by competing with EPF2 (AC Q8LC53) for the same receptors, ERECTA (AC Q42371) and TMM (AC Q9SSD1). Not cleaved by the protease CRSP (AC Q9LNU1). The polypeptide is EPIDERMAL PATTERNING FACTOR-like protein 9 (Arabidopsis thaliana (Mouse-ear cress)).